We begin with the raw amino-acid sequence, 158 residues long: Dysbindin domain-containing protein 1 (158 aa).

Disordered regions lie at residues 1 to 50 and 93 to 158; these read MEPP…VPAP and ADSD…PQED. S95 and S119 each carry phosphoserine. Residues 125–141 are compositionally biased toward basic and acidic residues; that stretch reads TRAEQSHEKQPLGDPER.

It belongs to the dysbindin family.

This is Dysbindin domain-containing protein 1 (DBNDD1) from Homo sapiens (Human).